The chain runs to 890 residues: Phosphotransferase RcsD (890 aa).

Over 1 to 21 (MRQKETTATTRFSLLPGSITR) the chain is Cytoplasmic. The chain crosses the membrane as a helical span at residues 22–42 (FFLLLIIVLLVTMGVMVQSAV). Topologically, residues 43 to 308 (NAWLKDKSYQ…GTLLLDTLQN (266 aa)) are periplasmic. Residues 309–329 (ILLPLLLNIGLLALALFGYTT) traverse the membrane as a helical segment. Residues 330–890 (FRHFSSRSTE…DIDSYVKSLL (561 aa)) are Cytoplasmic-facing. The histidine-like kinase stretch occupies residues 468–678 (NIGDALKEPA…RYSVHIKMLA (211 aa)). The region spanning 803–890 (AQLHASGYYA…DIDSYVKSLL (88 aa)) is the HPt domain. The residue at position 842 (histidine 842) is a Phosphohistidine.

Belongs to the RcsD family. In terms of assembly, interacts with RcsC and RcsB. Has a higher affinity for RcsB than for RcsC. Phosphorylated by RcsC.

It is found in the cell inner membrane. Functionally, component of the Rcs signaling system, which controls transcription of numerous genes. RcsD is a phosphotransfer intermediate between the sensor kinase RcsC and the response regulator RcsB. It acquires a phosphoryl group from RcsC and transfers it to RcsB. The system controls expression of genes involved in colanic acid capsule synthesis, biofilm formation and cell division. The sequence is that of Phosphotransferase RcsD from Escherichia coli (strain K12).